We begin with the raw amino-acid sequence, 376 residues long: Queuine tRNA-ribosyltransferase (376 aa).

Catalysis depends on Asp89, which acts as the Proton acceptor. Substrate contacts are provided by residues 89–93 (DSGGF), Asp143, Gln194, and Gly221. The RNA binding stretch occupies residues 252–258 (GVGTPAN). The active-site Nucleophile is Asp271. Positions 309, 311, 314, and 340 each coordinate Zn(2+).

This sequence belongs to the queuine tRNA-ribosyltransferase family. In terms of assembly, homodimer. Within each dimer, one monomer is responsible for RNA recognition and catalysis, while the other monomer binds to the replacement base PreQ1. Zn(2+) serves as cofactor.

It carries out the reaction 7-aminomethyl-7-carbaguanine + guanosine(34) in tRNA = 7-aminomethyl-7-carbaguanosine(34) in tRNA + guanine. Its pathway is tRNA modification; tRNA-queuosine biosynthesis. Functionally, catalyzes the base-exchange of a guanine (G) residue with the queuine precursor 7-aminomethyl-7-deazaguanine (PreQ1) at position 34 (anticodon wobble position) in tRNAs with GU(N) anticodons (tRNA-Asp, -Asn, -His and -Tyr). Catalysis occurs through a double-displacement mechanism. The nucleophile active site attacks the C1' of nucleotide 34 to detach the guanine base from the RNA, forming a covalent enzyme-RNA intermediate. The proton acceptor active site deprotonates the incoming PreQ1, allowing a nucleophilic attack on the C1' of the ribose to form the product. After dissociation, two additional enzymatic reactions on the tRNA convert PreQ1 to queuine (Q), resulting in the hypermodified nucleoside queuosine (7-(((4,5-cis-dihydroxy-2-cyclopenten-1-yl)amino)methyl)-7-deazaguanosine). The protein is Queuine tRNA-ribosyltransferase of Clostridium kluyveri (strain NBRC 12016).